The chain runs to 247 residues: Carboxy-S-adenosyl-L-methionine synthase (247 aa).

Residues Tyr40, 65 to 67, 90 to 91, 122 to 123, Asn137, and Arg204 each bind S-adenosyl-L-methionine; these read GAS, DN, and DI.

Belongs to the class I-like SAM-binding methyltransferase superfamily. Cx-SAM synthase family. As to quaternary structure, homodimer.

The enzyme catalyses prephenate + S-adenosyl-L-methionine = carboxy-S-adenosyl-L-methionine + 3-phenylpyruvate + H2O. In terms of biological role, catalyzes the conversion of S-adenosyl-L-methionine (SAM) to carboxy-S-adenosyl-L-methionine (Cx-SAM). The sequence is that of Carboxy-S-adenosyl-L-methionine synthase from Pseudomonas fluorescens (strain Pf0-1).